The primary structure comprises 31 residues: PTEN upstream open reading frame MP31 (31 aa).

As to quaternary structure, interacts with lactate dehydrogenases LDHA and LDHB; interaction with mitochondrial LDH leads to inhibition of lactate dehydrogenase activity, preventing conversion of lactate to pyruvate. In terms of tissue distribution, expressed in brain (at protein level). Expressed at lower levels in glioblastomas than in normal brain tissue (at protein level).

It localises to the mitochondrion. In terms of biological role, inhibits lactate dehydrogenase (LDH)-mediated conversion of lactate to pyruvate in mitochondria by competing with mitochondrial LDH for binding to NAD(+). Also inhibits cellular lactate utilization. The protein is PTEN upstream open reading frame MP31 of Homo sapiens (Human).